Reading from the N-terminus, the 281-residue chain is Very-long-chain (3R)-3-hydroxyacyl-CoA dehydratase 1 (281 aa).

The Cytoplasmic segment spans residues M1–W68. The helical transmembrane segment at L69–V88 threads the bilayer. The Lumenal segment spans residues R89–T107. Residues L108–I124 traverse the membrane as a helical segment. The Cytoplasmic portion of the chain corresponds to G125–T134. Residues G135–I152 traverse the membrane as a helical segment. At K153–E158 the chain is on the lumenal side. A helical transmembrane segment spans residues E159–I173. The Cytoplasmic portion of the chain corresponds to T174–Y196. A helical transmembrane segment spans residues N197–I214. Active-site residues include Y203 and E210. At Y215 to F244 the chain is on the lumenal side. N236 carries N-linked (GlcNAc...) asparagine glycosylation. The chain crosses the membrane as a helical span at residues L245–H262. At M263–D281 the chain is on the cytoplasmic side.

Belongs to the very long-chain fatty acids dehydratase HACD family. May interact with enzymes of the ELO family (including ELOVL1); with those enzymes that mediate condensation, the first of the four steps of the reaction cycle responsible for fatty acids elongation, may be part of a larger fatty acids elongase complex. Interacts with TECR. N-glycosylated. As to expression, expressed at high levels in heart, skeletal muscle and testis, weak expression in kidney and liver.

It is found in the endoplasmic reticulum membrane. It catalyses the reaction a very-long-chain (3R)-3-hydroxyacyl-CoA = a very-long-chain (2E)-enoyl-CoA + H2O. The catalysed reaction is (3R)-hydroxyhexadecanoyl-CoA = (2E)-hexadecenoyl-CoA + H2O. The enzyme catalyses (3R)-hydroxyoctadecanoyl-CoA = (2E)-octadecenoyl-CoA + H2O. It carries out the reaction (3R)-hydroxyeicosanoyl-CoA = (2E)-eicosenoyl-CoA + H2O. It catalyses the reaction (3R)-hydroxydocosanoyl-CoA = (2E)-docosenoyl-CoA + H2O. The catalysed reaction is (3R)-hydroxytetracosanoyl-CoA = (2E)-tetracosenoyl-CoA + H2O. The enzyme catalyses (3R)-hydroxyhexacosanoyl-CoA = (2E)-hexacosenoyl-CoA + H2O. The protein operates within lipid metabolism; fatty acid biosynthesis. This is Very-long-chain (3R)-3-hydroxyacyl-CoA dehydratase 1 from Mus musculus (Mouse).